We begin with the raw amino-acid sequence, 123 residues long: Small ribosomal subunit protein uS12c (123 aa).

This sequence belongs to the universal ribosomal protein uS12 family. Part of the 30S ribosomal subunit.

The protein resides in the plastid. It localises to the chloroplast. Its function is as follows. With S4 and S5 plays an important role in translational accuracy. Located at the interface of the 30S and 50S subunits. The protein is Small ribosomal subunit protein uS12c (rps12) of Pinus thunbergii (Japanese black pine).